A 260-amino-acid polypeptide reads, in one-letter code: Proteasome subunit alpha (260 aa).

Belongs to the peptidase T1A family. The 20S proteasome core is composed of 14 alpha and 14 beta subunits that assemble into four stacked heptameric rings, resulting in a barrel-shaped structure. The two inner rings, each composed of seven catalytic beta subunits, are sandwiched by two outer rings, each composed of seven alpha subunits. The catalytic chamber with the active sites is on the inside of the barrel. Has a gated structure, the ends of the cylinder being occluded by the N-termini of the alpha-subunits. Is capped at one or both ends by the proteasome regulatory ATPase, PAN.

Its subcellular location is the cytoplasm. Its activity is regulated as follows. The formation of the proteasomal ATPase PAN-20S proteasome complex, via the docking of the C-termini of PAN into the intersubunit pockets in the alpha-rings, triggers opening of the gate for substrate entry. Interconversion between the open-gate and close-gate conformations leads to a dynamic regulation of the 20S proteasome proteolysis activity. Component of the proteasome core, a large protease complex with broad specificity involved in protein degradation. In Thermococcus onnurineus (strain NA1), this protein is Proteasome subunit alpha.